Consider the following 336-residue polypeptide: Fructose-1,6-bisphosphatase class 1 (336 aa).

Residues E90, D112, L114, and D115 each coordinate Mg(2+). Substrate-binding positions include 115–118, N211, and K277; that span reads DGSS. E283 provides a ligand contact to Mg(2+).

Belongs to the FBPase class 1 family. Homotetramer. The cofactor is Mg(2+).

The protein resides in the cytoplasm. It catalyses the reaction beta-D-fructose 1,6-bisphosphate + H2O = beta-D-fructose 6-phosphate + phosphate. It participates in carbohydrate biosynthesis; gluconeogenesis. The protein is Fructose-1,6-bisphosphatase class 1 of Pseudomonas paraeruginosa (strain DSM 24068 / PA7) (Pseudomonas aeruginosa (strain PA7)).